Here is a 62-residue protein sequence, read N- to C-terminus: Protein UL148D (62 aa).

Residues 30–50 (WWISVAIVIFIGVCLVALMYF) traverse the membrane as a helical segment.

It is found in the host membrane. The chain is Protein UL148D (UL148D) from Human cytomegalovirus (strain Merlin) (HHV-5).